Consider the following 316-residue polypeptide: Pantothenate kinase (316 aa).

Residue 95-102 participates in ATP binding; it reads GSVAVGKS.

Belongs to the prokaryotic pantothenate kinase family.

It is found in the cytoplasm. The catalysed reaction is (R)-pantothenate + ATP = (R)-4'-phosphopantothenate + ADP + H(+). It participates in cofactor biosynthesis; coenzyme A biosynthesis; CoA from (R)-pantothenate: step 1/5. This Photorhabdus laumondii subsp. laumondii (strain DSM 15139 / CIP 105565 / TT01) (Photorhabdus luminescens subsp. laumondii) protein is Pantothenate kinase.